The primary structure comprises 227 residues: MFS-type transporter FVEG_08288 (227 aa).

Residues 8 to 28 (VFLTVLIAIASCSVYILNIAI) form a helical membrane-spanning segment. Residue Asn40 is glycosylated (N-linked (GlcNAc...) asparagine). Helical transmembrane passes span 43–63 (TVGL…MAGG), 100–120 (VANT…YYGV), 122–142 (FMVP…HFTL), 164–181 (FVRN…APWM), and 188–208 (YMMT…IWLI).

It belongs to the major facilitator superfamily.

It localises to the membrane. Its function is as follows. MFS-type transporter; part of the Fusarium detoxification of benzoxazolinone cluster 1 (FDB1) involved in the degradation of benzoxazolinones produced by the host plant. Maize, wheat, and rye produce the 2 benzoxazinone phytoanticipins 2,4-dihy-droxy-7-methoxy-1,4-benzoxazin-3-one (DIMBOA) and 2,4-dihydroxy-1,4-benzoxazin-3-one (DIBOA) that, due to their inherent instability once released, spontaneously degrade to the more stable corresponding benzoxazolinones, 6-methoxy-2-benzoxazolinone (MBOA) and 2-benzoxazolinone (BOA), respectively. This Gibberella moniliformis (strain M3125 / FGSC 7600) (Maize ear and stalk rot fungus) protein is MFS-type transporter FVEG_08288.